The chain runs to 107 residues: U1-lycotoxin-Ls1v (107 aa).

Residues 1–20 (MMKVLVVVALLVTLISYSSS) form the signal peptide. The propeptide occupies 21–41 (EGIDDLEADELLSLTANEQTR). Cystine bridges form between C44-C59, C51-C68, C58-C86, and C70-C84.

The protein belongs to the neurotoxin 19 (CSTX) family. 04 (U1-Lctx) subfamily. In terms of tissue distribution, expressed by the venom gland.

It localises to the secreted. This chain is U1-lycotoxin-Ls1v, found in Lycosa singoriensis (Wolf spider).